Here is a 523-residue protein sequence, read N- to C-terminus: UDP-glucuronosyltransferase 3A1 (523 aa).

An N-terminal signal peptide occupies residues 1 to 22 (MAAHRSWLLVSFFLLEVLLLEA). Residues 23-487 (AKILTISTLS…QPWHEQYMLD (465 aa)) lie on the Extracellular side of the membrane. Residue asparagine 70 is glycosylated (N-linked (GlcNAc...) asparagine). A helical transmembrane segment spans residues 488–508 (VFLFLLGLTLGTLWLSVKVLV). The Cytoplasmic portion of the chain corresponds to 509-523 (AVTRYLSISRKVKQA).

Belongs to the UDP-glycosyltransferase family. As to expression, highly expressed in kidney, while it is expressed at low levels in liver. Not detected in other tissues examined.

The protein resides in the membrane. It catalyses the reaction glucuronate acceptor + UDP-alpha-D-glucuronate = acceptor beta-D-glucuronoside + UDP + H(+). Functionally, UDP-glucuronosyltransferases catalyze phase II biotransformation reactions in which lipophilic substrates are conjugated with glucuronic acid to increase water solubility and enhance excretion. They are of major importance in the conjugation and subsequent elimination of potentially toxic xenobiotics and endogenous compounds. This Mus musculus (Mouse) protein is UDP-glucuronosyltransferase 3A1 (Ugt3a1).